A 391-amino-acid chain; its full sequence is Formate-dependent phosphoribosylglycinamide formyltransferase (391 aa).

Residues 20-21 (EL) and Glu80 contribute to the N(1)-(5-phospho-beta-D-ribosyl)glycinamide site. Residues Arg112, Lys153, 158-163 (SSGKGQ), 193-196 (EGFV), and Glu201 each bind ATP. One can recognise an ATP-grasp domain in the interval 117–306 (RLAAETLGLP…EFALHVRAIL (190 aa)). Residues Glu265 and Glu277 each contribute to the Mg(2+) site. N(1)-(5-phospho-beta-D-ribosyl)glycinamide contacts are provided by residues Asp284, Lys354, and 361–362 (RR).

It belongs to the PurK/PurT family. As to quaternary structure, homodimer.

It catalyses the reaction N(1)-(5-phospho-beta-D-ribosyl)glycinamide + formate + ATP = N(2)-formyl-N(1)-(5-phospho-beta-D-ribosyl)glycinamide + ADP + phosphate + H(+). It functions in the pathway purine metabolism; IMP biosynthesis via de novo pathway; N(2)-formyl-N(1)-(5-phospho-D-ribosyl)glycinamide from N(1)-(5-phospho-D-ribosyl)glycinamide (formate route): step 1/1. Its function is as follows. Involved in the de novo purine biosynthesis. Catalyzes the transfer of formate to 5-phospho-ribosyl-glycinamide (GAR), producing 5-phospho-ribosyl-N-formylglycinamide (FGAR). Formate is provided by PurU via hydrolysis of 10-formyl-tetrahydrofolate. This is Formate-dependent phosphoribosylglycinamide formyltransferase from Shewanella putrefaciens (strain CN-32 / ATCC BAA-453).